The primary structure comprises 229 residues: Uracil-DNA glycosylase (229 aa).

Asp64 (proton acceptor) is an active-site residue.

This sequence belongs to the uracil-DNA glycosylase (UDG) superfamily. UNG family.

The protein resides in the cytoplasm. It catalyses the reaction Hydrolyzes single-stranded DNA or mismatched double-stranded DNA and polynucleotides, releasing free uracil.. In terms of biological role, excises uracil residues from the DNA which can arise as a result of misincorporation of dUMP residues by DNA polymerase or due to deamination of cytosine. This is Uracil-DNA glycosylase from Geobacillus kaustophilus (strain HTA426).